Consider the following 606-residue polypeptide: MRSNSCGELRSKHIASNVQLCGWVDRCRDHGGVIFIDLRDRSGTIQITVDPDQGAELFASAESLRNETVLQITGLVRPRPADAINSKLSTGEIEVLADGLEVLNPVTGNLPFTVSIHDEEPVKEELRLRHRHLDLRRERMSRNLQLRHTTIKTARRFLEDEGFIEVETPVLTRSTPEGARDYLVPSRVCSGEWFALPQSPQLFKQLLMVGGLERYYQVARCFRDEDLRADRQPEFTQLDIEMSFMDQEQILKLNERLIATIWKAVKGIDLPLPFPRLTWHEAMDRYGTDRPDTRYGMELNDVSDILKDMGFKVFSGAIAAGGSVKCITVPNGNDLISNVRIKPGGDIFNEAQKAGAGGLAFIRVRDSDEIDSIGAIKDNLNSKQKTALLKQTGAKAGDLILFGAGKTATVNSALDRVRQFLGRELGLIPTDQDNKLWQFLWVVDFPMFELNAEENRLEALHHPFCAPNKDDLGNDPDAWMERLPQARAQAYDLVLNGLELGGGSLRIHNAELQRQVLQTIGLPLEEANQQFGFLIDALEMGAPPHGGLAFGMDRIVMLLTGEDSIRDTIAFPKTQQARCLMTQAPAGVSNHQLEELHVESTWVDPE.

Residue Glu-177 coordinates L-aspartate. The aspartate stretch occupies residues 201–204 (QLFK). Arg-223 provides a ligand contact to L-aspartate. Residues 223-225 (RDE) and Gln-232 each bind ATP. An L-aspartate-binding site is contributed by His-461. Glu-499 is a binding site for ATP. Arg-506 contacts L-aspartate. 551–554 (GMDR) is a binding site for ATP.

It belongs to the class-II aminoacyl-tRNA synthetase family. Type 1 subfamily. Homodimer.

It localises to the cytoplasm. It catalyses the reaction tRNA(Asx) + L-aspartate + ATP = L-aspartyl-tRNA(Asx) + AMP + diphosphate. Aspartyl-tRNA synthetase with relaxed tRNA specificity since it is able to aspartylate not only its cognate tRNA(Asp) but also tRNA(Asn). Reaction proceeds in two steps: L-aspartate is first activated by ATP to form Asp-AMP and then transferred to the acceptor end of tRNA(Asp/Asn). In Prochlorococcus marinus (strain MIT 9303), this protein is Aspartate--tRNA(Asp/Asn) ligase.